Consider the following 462-residue polypeptide: tRNA modification GTPase MnmE (462 aa).

Residues arginine 23, glutamate 88, and arginine 127 each contribute to the (6S)-5-formyl-5,6,7,8-tetrahydrofolate site. Positions 224-383 (GLATVIIGRP…LEKAIADLFF (160 aa)) constitute a TrmE-type G domain. Position 234 (asparagine 234) interacts with K(+). GTP-binding positions include 234–239 (NVGKSS), 253–259 (TDIPGTT), and 278–281 (DTAG). Serine 238 serves as a coordination point for Mg(2+). K(+) contacts are provided by threonine 253, isoleucine 255, and threonine 258. Threonine 259 serves as a coordination point for Mg(2+). Lysine 462 serves as a coordination point for (6S)-5-formyl-5,6,7,8-tetrahydrofolate.

Belongs to the TRAFAC class TrmE-Era-EngA-EngB-Septin-like GTPase superfamily. TrmE GTPase family. In terms of assembly, homodimer. Heterotetramer of two MnmE and two MnmG subunits. K(+) is required as a cofactor.

The protein localises to the cytoplasm. Functionally, exhibits a very high intrinsic GTPase hydrolysis rate. Involved in the addition of a carboxymethylaminomethyl (cmnm) group at the wobble position (U34) of certain tRNAs, forming tRNA-cmnm(5)s(2)U34. This chain is tRNA modification GTPase MnmE, found in Geobacillus thermodenitrificans (strain NG80-2).